Here is a 228-residue protein sequence, read N- to C-terminus: 3-dehydroquinate dehydratase (228 aa).

Residues Glu-30–Arg-32 and Arg-62 each bind 3-dehydroquinate. His-118 (proton donor/acceptor) is an active-site residue. Lys-143 (schiff-base intermediate with substrate) is an active-site residue. 3 residues coordinate 3-dehydroquinate: Arg-186, Ser-205, and Gln-209.

Belongs to the type-I 3-dehydroquinase family. Homodimer.

It catalyses the reaction 3-dehydroquinate = 3-dehydroshikimate + H2O. It functions in the pathway metabolic intermediate biosynthesis; chorismate biosynthesis; chorismate from D-erythrose 4-phosphate and phosphoenolpyruvate: step 3/7. Its function is as follows. Involved in the third step of the chorismate pathway, which leads to the biosynthesis of aromatic amino acids. Catalyzes the cis-dehydration of 3-dehydroquinate (DHQ) and introduces the first double bond of the aromatic ring to yield 3-dehydroshikimate. This Streptococcus pyogenes serotype M12 (strain MGAS9429) protein is 3-dehydroquinate dehydratase.